The chain runs to 172 residues: UPF0254 protein Mlab_1743 (172 aa).

Belongs to the UPF0254 family.

The polypeptide is UPF0254 protein Mlab_1743 (Methanocorpusculum labreanum (strain ATCC 43576 / DSM 4855 / Z)).